A 37-amino-acid chain; its full sequence is Large ribosomal subunit protein bL36c (37 aa).

It belongs to the bacterial ribosomal protein bL36 family.

Its subcellular location is the plastid. It is found in the chloroplast. This chain is Large ribosomal subunit protein bL36c, found in Bigelowiella natans (Pedinomonas minutissima).